Consider the following 415-residue polypeptide: Gamma-glutamyl phosphate reductase (415 aa).

The protein belongs to the gamma-glutamyl phosphate reductase family.

It localises to the cytoplasm. It carries out the reaction L-glutamate 5-semialdehyde + phosphate + NADP(+) = L-glutamyl 5-phosphate + NADPH + H(+). It participates in amino-acid biosynthesis; L-proline biosynthesis; L-glutamate 5-semialdehyde from L-glutamate: step 2/2. Catalyzes the NADPH-dependent reduction of L-glutamate 5-phosphate into L-glutamate 5-semialdehyde and phosphate. The product spontaneously undergoes cyclization to form 1-pyrroline-5-carboxylate. In Oceanobacillus iheyensis (strain DSM 14371 / CIP 107618 / JCM 11309 / KCTC 3954 / HTE831), this protein is Gamma-glutamyl phosphate reductase.